Here is a 687-residue protein sequence, read N- to C-terminus: Fimbrin-5 (687 aa).

The 68-residue stretch at 7–74 (VLVSDPWLQS…KSVLDKSYPN (68 aa)) folds into the EF-hand domain. Calponin-homology (CH) domains are found at residues 122–239 (ESEK…KIQM), 267–370 (LAPE…QHRN), 392–498 (SREE…RYTM), and 513–621 (EITD…YWSL). 2 actin-binding regions span residues 122–370 (ESEK…QHRN) and 392–621 (SREE…YWSL). Residues 628-687 (ESTVSEDATDDGDANSVAGEISNLSIDGASESSPTVQDQELLTKADNDEDEVDGENNKDA) form a disordered region. Positions 649 to 667 (SNLSIDGASESSPTVQDQE) are enriched in polar residues.

As to quaternary structure, interacts with F-actin. Expressed in mature pollen.

It is found in the cytoplasm. The protein resides in the cytoskeleton. In terms of biological role, cross-links actin filaments (F-actin) in a calcium independent manner. Induces the formation of actin bundles. Stabilizes and prevents F-actin depolymerization mediated by latrunculin B (LatB). This Arabidopsis thaliana (Mouse-ear cress) protein is Fimbrin-5.